A 225-amino-acid polypeptide reads, in one-letter code: Acidic leucine-rich nuclear phosphoprotein 32-related protein 2 (225 aa).

LRR repeat units lie at residues 39 to 60 (KLEL…PVLP), 61 to 82 (ALNY…DVLI), and 87 to 107 (EIKK…RTLK). Positions 121-161 (SSLGLLDDYRVKMFEMIPSLKILDGCDVDGEEVEEEFAAGE) constitute an LRRCT domain. A compositionally biased stretch (acidic residues) spans 155–175 (EEFAAGEGAEDSDEGDSDEDG). A disordered region spans residues 155 to 225 (EEFAAGEGAE…DEPEAKKSAE (71 aa)).

This sequence belongs to the ANP32 family.

This Caenorhabditis elegans protein is Acidic leucine-rich nuclear phosphoprotein 32-related protein 2.